Reading from the N-terminus, the 84-residue chain is Large ribosomal subunit protein bL27 (84 aa).

The tract at residues 1–21 (MAHKKGASSTRNGRDSNAQRL) is disordered. A compositionally biased stretch (polar residues) spans 7–19 (ASSTRNGRDSNAQ).

This sequence belongs to the bacterial ribosomal protein bL27 family.

This is Large ribosomal subunit protein bL27 from Clavibacter michiganensis subsp. michiganensis (strain NCPPB 382).